The primary structure comprises 412 residues: Argininosuccinate synthase (412 aa).

Residues 12–20 (AYSGGLDTS) and Ala39 contribute to the ATP site. L-citrulline contacts are provided by Tyr91 and Ser96. Gly121 contacts ATP. Positions 123, 127, and 128 each coordinate L-aspartate. Asn127 provides a ligand contact to L-citrulline. L-citrulline contacts are provided by Arg131, Ser180, Ser189, Glu265, and Tyr277.

Belongs to the argininosuccinate synthase family. Type 1 subfamily. Homotetramer.

The protein localises to the cytoplasm. It catalyses the reaction L-citrulline + L-aspartate + ATP = 2-(N(omega)-L-arginino)succinate + AMP + diphosphate + H(+). The protein operates within amino-acid biosynthesis; L-arginine biosynthesis; L-arginine from L-ornithine and carbamoyl phosphate: step 2/3. The chain is Argininosuccinate synthase from Pseudoalteromonas atlantica (strain T6c / ATCC BAA-1087).